Reading from the N-terminus, the 330-residue chain is GTPase Obg (330 aa).

In terms of domain architecture, Obg spans 1–159; it reads MHFIDEVKIY…MWIHLSLKLL (159 aa). The OBG-type G domain occupies 160-327; that stretch reads SDVGLVGFPN…IVKLALETIK (168 aa). GTP-binding positions include 166–173, 191–195, 212–215, 279–282, and 308–310; these read GFPNAGKS, FTTLV, DIPG, NKCD, and STY. Residues S173 and T193 each contribute to the Mg(2+) site.

Belongs to the TRAFAC class OBG-HflX-like GTPase superfamily. OBG GTPase family. Monomer. The cofactor is Mg(2+).

The protein resides in the cytoplasm. Its function is as follows. An essential GTPase which binds GTP, GDP and possibly (p)ppGpp with moderate affinity, with high nucleotide exchange rates and a fairly low GTP hydrolysis rate. Plays a role in control of the cell cycle, stress response, ribosome biogenesis and in those bacteria that undergo differentiation, in morphogenesis control. The sequence is that of GTPase Obg from Rickettsia massiliae (strain Mtu5).